A 172-amino-acid chain; its full sequence is Ribosomally synthesized cyclic peptide phomopsin precursor phomA (172 aa).

The signal sequence occupies residues 1–18 (MRFTPAIVIAAFCSLAVA). 11 consecutive propeptides follow at residues 19–35 (APAAKAIARSPSEAVED), 42–50 (KKRGEAVED), 57–65 (KKRGEAVED), 72–79 (KRGEAVED), 86–93 (KRGEAVED), 100–108 (KKRGEAVED), 115–122 (KRGEAVED), 129–137 (RKRGEAVED), 144–151 (KRGEAVED), 158–165 (KRGEAVED), and lysine 172.

PhomA is processed by several endopeptidases including kexin proteases as well as the cluster-specific S41 family peptidase phomP1 and the oligopeptidase phomG to produce 10 identical copies of the hexapeptide Tyr-Val-Ile-Pro-Ile-Asp, that is further modified to yield phomapsins. The timing and order of proteolysis of the phomA precursor and PTMs are still unknown. Two tyrosinase-like enzymes, phomQ1 and phomQ2, catalyze the chlorination and hydroxylation of Tyr, respectively. PhomYb, is proposed to be involved in the construction of the macrocyclic structure. The other 4 ustYa family proteins may be involved in PTMs that generate the unique structure of phomopsin A. PhomYa is required for the hydroxylation of C-beta of Tyr. PhomYc, phomYd, and phomYe are responsible for the biosynthesis of 2,3-dehydroisoleucine (dIle), 2,3-dehydroaspartic acid (dAsp), and 3,4-dehydroproline (dPro), respectively. While dIle formation by phomYc is indispensable for the installation of dAsp by phomYd, the order of the other PTMs have not been elucidated yet. Most of the biosynthetic enzymes likely have broad substrate specificity, and thus, there might be a metabolic grid from a precursor to phomopsin A. The enzyme(s) responsible for the biosynthesis of 3,4-dehydrovaline (dVal) have also not been identified yet. Finally, phomM acts as an S-adenosylmethionine-dependent alpha-N-methyltransferase that catalyzes two successive N-methylation reactions, converting N-desmethyl-phomopsin A to phomopsin A and phomopsin A further to an N,N-dimethylated congener called phomopsin E.

The protein operates within mycotoxin biosynthesis. In terms of biological role, ribosomally synthesized cyclic peptide phomopsin precursor; part of the gene cluster that mediates the biosynthesis of the phomopsins, a group of hexapeptide mycotoxins which infects lupins and causes lupinosis disease in livestock. The phomA translated product contains a 10-fold repeated peptide embedding the hexapeptide Tyr-Val-Ile-Pro-Ile-Asp, that is converted into phomapsins. After being excised from the precursor peptide by kexin proteases, the core peptides are cyclized and modified post-translationally by enzymes encoded within the corresponding gene cluster. The chain is Ribosomally synthesized cyclic peptide phomopsin precursor phomA from Diaporthe leptostromiformis (Lupinosis disease fungus).